The chain runs to 582 residues: Phosphoglucomutase, cytoplasmic (582 aa).

Alpha-D-glucose 1,6-bisphosphate contacts are provided by Arg-25 and Ser-124. Ser-124 serves as the catalytic Phosphoserine intermediate. Mg(2+) contacts are provided by Ser-124, Asp-299, Asp-301, and Asp-303. Phosphoserine is present on Ser-124. Alpha-D-glucose 1,6-bisphosphate contacts are provided by Asp-303, Arg-304, Thr-367, Glu-386, Ser-388, and Lys-399.

Belongs to the phosphohexose mutase family. In terms of assembly, monomer. It depends on Mg(2+) as a cofactor.

Its subcellular location is the cytoplasm. It carries out the reaction alpha-D-glucose 1-phosphate = alpha-D-glucose 6-phosphate. It catalyses the reaction O-phospho-L-seryl-[protein] + alpha-D-glucose 1-phosphate = alpha-D-glucose 1,6-bisphosphate + L-seryl-[protein]. The enzyme catalyses alpha-D-glucose 1,6-bisphosphate + L-seryl-[protein] = O-phospho-L-seryl-[protein] + alpha-D-glucose 6-phosphate. In terms of biological role, catalyzes the reversible isomerization of alpha-D-glucose 1-phosphate to alpha-D-glucose 6-phosphate. The mechanism proceeds via the intermediate compound alpha-D-glucose 1,6-bisphosphate. This enzyme participates in both the breakdown and synthesis of glucose. This is Phosphoglucomutase, cytoplasmic (PGM1) from Populus tremula (European aspen).